A 77-amino-acid polypeptide reads, in one-letter code: SS18-like protein 2 (77 aa).

The short motif at 50 to 53 is the SH2-binding element; that stretch reads YQHV.

The protein belongs to the SS18 family.

This Mus musculus (Mouse) protein is SS18-like protein 2 (Ss18l2).